A 115-amino-acid chain; its full sequence is uncharacterized protein (115 aa).

The tract at residues 1–74 is disordered; that stretch reads MGTGLRSQSL…VPGSLGDTEQ (74 aa).

This is an uncharacterized protein from Homo sapiens (Human).